The chain runs to 247 residues: Ice-binding protein (247 aa).

A signal peptide spans 1–19 (MTFSILSIFVFGLISSSVA). Asn219 is a glycosylation site (N-linked (GlcNAc...) asparagine).

The protein belongs to the ice-binding protein family.

It is found in the secreted. Binds ice crystals and most probably inhibits their growth in order to prevent cell damage from extracellular ice. The chain is Ice-binding protein from Flammulina populicola (Enokitake mushroom).